We begin with the raw amino-acid sequence, 224 residues long: Germin-like protein 8-8 (224 aa).

The signal sequence occupies residues 1–22 (MASPSFCLLAALLALVSWQAIA). Residues C32 and C47 are joined by a disulfide bond. The 151-residue stretch at 62–212 (AMLDTPRKTN…AFQVEKGTID (151 aa)) folds into the Cupin type-1 domain. N-linked (GlcNAc...) asparagine glycosylation occurs at N76. H109, H111, and E116 together coordinate Mn(2+). Residue N135 is glycosylated (N-linked (GlcNAc...) asparagine). Residue H157 participates in Mn(2+) binding.

The protein belongs to the germin family. As to quaternary structure, oligomer (believed to be a pentamer but probably hexamer).

The protein localises to the secreted. The protein resides in the extracellular space. Its subcellular location is the apoplast. In terms of biological role, plays a role in broad-spectrum disease resistance. Probably has no oxalate oxidase activity even if the active site is conserved. The polypeptide is Germin-like protein 8-8 (Oryza sativa subsp. japonica (Rice)).